The following is a 355-amino-acid chain: Peptide chain release factor 1 (355 aa).

Gln-233 carries the post-translational modification N5-methylglutamine.

This sequence belongs to the prokaryotic/mitochondrial release factor family. Methylated by PrmC. Methylation increases the termination efficiency of RF1.

Its subcellular location is the cytoplasm. Its function is as follows. Peptide chain release factor 1 directs the termination of translation in response to the peptide chain termination codons UAG and UAA. This is Peptide chain release factor 1 from Desulfitobacterium hafniense (strain DSM 10664 / DCB-2).